A 437-amino-acid polypeptide reads, in one-letter code: Probable N-acetylmuramidase (437 aa).

Residues 1–57 form the signal peptide; it reads MPVSRVKVKNRHLKKKTKKPLAFYKPTTKFVGAVLIAGTLTTTHELLLQQTSPMVQA. 3 disordered regions span residues 217–244, 291–319, and 367–392; these read SSAG…SSTT, SSTN…ASQT, and ATSN…NSNA. The LysM 1 domain maps to 243–286; the sequence is TTYTVKSGDTLWGISQRYGISVAQIQSANNLKSTIIYIGQKLLL. The segment covering 291 to 317 has biased composition (low complexity); that stretch reads SSTNSGGSNNSASTTPTTSVTPAKPAS. Residues 319–362 enclose the LysM 2 domain; it reads TSVKVKSGDTLWALSVKYKTSIAQLKSWNHLSSDTIYIGQNLIV. In terms of domain architecture, LysM 3 spans 393–436; it reads SIHKVVKGDTLWGLSQKSGSPIASIKAWNHLSSDTILIGQYLRI.

This sequence belongs to the glycosyl hydrolase 73 family.

The protein localises to the secreted. It carries out the reaction Hydrolysis of (1-&gt;4)-beta-linkages between N-acetylmuramic acid and N-acetyl-D-glucosamine residues in a peptidoglycan and between N-acetyl-D-glucosamine residues in chitodextrins.. In terms of biological role, hydrolyzes the cell wall of L.lactis and M.lysodeikticus. Required for cell separation during growth. This Lactococcus lactis subsp. cremoris (Streptococcus cremoris) protein is Probable N-acetylmuramidase (acmA).